The following is a 104-amino-acid chain: Large ribosomal subunit protein uL24 (104 aa).

It belongs to the universal ribosomal protein uL24 family. As to quaternary structure, part of the 50S ribosomal subunit.

Functionally, one of two assembly initiator proteins, it binds directly to the 5'-end of the 23S rRNA, where it nucleates assembly of the 50S subunit. Its function is as follows. One of the proteins that surrounds the polypeptide exit tunnel on the outside of the subunit. The chain is Large ribosomal subunit protein uL24 from Colwellia psychrerythraea (strain 34H / ATCC BAA-681) (Vibrio psychroerythus).